The sequence spans 192 residues: Putative manganese efflux pump MntP (192 aa).

Helical transmembrane passes span 3-23 (LIFT…AVSF), 38-58 (FILA…GWLL), 61-81 (GFAD…LFII), 101-121 (VFNF…ALAV), 130-150 (IVPL…SVGG), and 167-187 (ILGG…HLVW).

This sequence belongs to the MntP (TC 9.B.29) family.

The protein resides in the cell membrane. Its function is as follows. Probably functions as a manganese efflux pump. This is Putative manganese efflux pump MntP from Methanospirillum hungatei JF-1 (strain ATCC 27890 / DSM 864 / NBRC 100397 / JF-1).